Here is a 209-residue protein sequence, read N- to C-terminus: 7-carboxy-7-deazaguanine synthase (209 aa).

Substrate-binding positions include I10–G12 and R25. One can recognise a Radical SAM core domain in the interval Y16 to D205. Residues C29, C33, and C36 each coordinate [4Fe-4S] cluster. T38 serves as a coordination point for Mg(2+). T68 is a binding site for substrate. G70 is an S-adenosyl-L-methionine binding site.

It belongs to the radical SAM superfamily. 7-carboxy-7-deazaguanine synthase family. In terms of assembly, homodimer. The cofactor is [4Fe-4S] cluster. S-adenosyl-L-methionine serves as cofactor. Requires Mg(2+) as cofactor.

It carries out the reaction 6-carboxy-5,6,7,8-tetrahydropterin + H(+) = 7-carboxy-7-deazaguanine + NH4(+). Its pathway is purine metabolism; 7-cyano-7-deazaguanine biosynthesis. Its function is as follows. Catalyzes the complex heterocyclic radical-mediated conversion of 6-carboxy-5,6,7,8-tetrahydropterin (CPH4) to 7-carboxy-7-deazaguanine (CDG), a step common to the biosynthetic pathways of all 7-deazapurine-containing compounds. In Thermoplasma acidophilum (strain ATCC 25905 / DSM 1728 / JCM 9062 / NBRC 15155 / AMRC-C165), this protein is 7-carboxy-7-deazaguanine synthase.